Here is a 120-residue protein sequence, read N- to C-terminus: Glycine cleavage system H protein (120 aa).

Residues 17–99 (IATVGITSHA…QGAGWFFKLK (83 aa)) form the Lipoyl-binding domain. Residue Lys-58 is modified to N6-lipoyllysine.

This sequence belongs to the GcvH family. As to quaternary structure, the glycine cleavage system is composed of four proteins: P, T, L and H. The cofactor is (R)-lipoate.

The glycine cleavage system catalyzes the degradation of glycine. The H protein shuttles the methylamine group of glycine from the P protein to the T protein. This is Glycine cleavage system H protein from Agrobacterium fabrum (strain C58 / ATCC 33970) (Agrobacterium tumefaciens (strain C58)).